Consider the following 516-residue polypeptide: Glucose-1-phosphate adenylyltransferase large subunit 1, chloroplastic/amyloplastic (516 aa).

The N-terminal 45 residues, 1 to 45 (MQFALALDTNSGPHQIRSCEGDGIDRLEKLSIGGRKQEKALRNRC), are a transit peptide targeting the chloroplast.

This sequence belongs to the bacterial/plant glucose-1-phosphate adenylyltransferase family. Heterotetramer. In terms of tissue distribution, endosperm.

It localises to the plastid. The protein localises to the chloroplast. The protein resides in the amyloplast. It carries out the reaction alpha-D-glucose 1-phosphate + ATP + H(+) = ADP-alpha-D-glucose + diphosphate. Its pathway is glycan biosynthesis; starch biosynthesis. Its activity is regulated as follows. Activated by 3'phosphoglycerate, inhibited by orthophosphate. Allosteric regulation. In terms of biological role, this protein plays a role in synthesis of starch. It catalyzes the synthesis of the activated glycosyl donor, ADP-glucose from Glc-1-P and ATP. This Zea mays (Maize) protein is Glucose-1-phosphate adenylyltransferase large subunit 1, chloroplastic/amyloplastic (SH2).